Reading from the N-terminus, the 1295-residue chain is MMEILRGSPALSAFRINKLLARFQAANLQVHNIYAEYVHFADLNAPLNDSEQAQLTRLLQYGPALSSHTPAGKLLLVTPRPGTISPWSSKATDIAHNCGLQQVDRLERGVAYYIEASTLTAEQWRQVAAELHDRMMETVFSSLTDAEKLFIHHQPAPVSSVDLLGEGRQALIDANLRLGLALAEDEIDYLQEAFTKLGRNPNDIELYMFAQANSEHCRHKIFNADWIIDGKPQPKSLFKMIKNTFETTPDYVLSAYKDNAAVMEGSAVGRYFADHNTGRYDFHQEPAHILMKVETHNHPTAISPWPGAATGSGGEIRDEGATGRGAKPKAGLVGFSVSNLRIPGFEQPWEEDFGKPERIVTALDIMTEGPLGGAAFNNEFGRPALTGYFRTYEEKVNSHNGEELRGYHKPIMLAGGIGNIRADHVQKGEIVVGAKLIVLGGPAMNIGLGGGAASSMASGQSDADLDFASVQRDNPEMERRCQEVIDRCWQLGDANPILFIHDVGAGGLSNAMPELVSDGGRGGKFELRDILSDEPGMSPLEIWCNESQERYVLAVAADQLPLFDELCKRERAPYAVIGDATEEQHLSLHDNHFDNQPIDLPLDVLLGKTPKMTRDVQTLKAKGDALNRADITIADAVKRVLHLPTVAEKTFLVTIGDRTVTGMVARDQMVGPWQVPVADCAVTTASLDSYYGEAMSIGERAPVALLDFAASARLAVGEALTNIAATQIGDIKRIKLSANWMAAAGHPGEDAGLYDAVKAVGEELCPQLGLTIPVGKDSMSMKTRWQEGNEQREMTSPLSLVISAFARVEDVRHTLTPQLSTEDNALLLIDLGKGHNALGATALAQVYRQLGDKPADVRDVAQLKGFYDAMQALVAARKLLAWHDRSDGGLLVTLAEMAFAGHCGVQVDIAALGDDHLAALFNEELGGVIQVRAEDRDAVEALLAQYGLADCVHYLGQALAGDRFVITANDQTVFSESRTTLRVWWAETTWQMQRLRDNPQCADQEHEAKANDTDPGLNVKLSFDINEDIAAPYIATGARPKVAVLREQGVNSHVEMAAAFHRAGFDAIDVHMSDLLGGRIGLGNFHALVACGGFSYGDVLGAGEGWAKSILFNHRVRDEFETFFHRPQTLALGVCNGCQMMSNLRELIPGSELWPRFVRNHSDRFEARFSLVEVTQSPSLLLQGMVGSQMPIAVSHGEGRVEVRDDAHLAALESKGLVALRYVDNFGKVTETYPANPNGSPNGITAVTTENGRVTIMMPHPERVFRTVANSWHPENWGEDSPWMRIFRNARKQLG.

Positions 305–327 are disordered; the sequence is WPGAATGSGGEIRDEGATGRGAK. Residues 307–318, 386–388, and alanine 678 each bind ATP; these read GAATGSGGEIRD and TGY. Aspartate 679, glutamate 718, asparagine 722, and aspartate 884 together coordinate Mg(2+). Serine 886 contacts ATP. The 254-residue stretch at 1042–1295 folds into the Glutamine amidotransferase type-1 domain; sequence VAVLREQGVN…IFRNARKQLG (254 aa). Catalysis depends on cysteine 1135, which acts as the Nucleophile. Active-site residues include histidine 1260 and glutamate 1262.

In the N-terminal section; belongs to the FGAMS family. Monomer.

It is found in the cytoplasm. It carries out the reaction N(2)-formyl-N(1)-(5-phospho-beta-D-ribosyl)glycinamide + L-glutamine + ATP + H2O = 2-formamido-N(1)-(5-O-phospho-beta-D-ribosyl)acetamidine + L-glutamate + ADP + phosphate + H(+). It functions in the pathway purine metabolism; IMP biosynthesis via de novo pathway; 5-amino-1-(5-phospho-D-ribosyl)imidazole from N(2)-formyl-N(1)-(5-phospho-D-ribosyl)glycinamide: step 1/2. Its function is as follows. Phosphoribosylformylglycinamidine synthase involved in the purines biosynthetic pathway. Catalyzes the ATP-dependent conversion of formylglycinamide ribonucleotide (FGAR) and glutamine to yield formylglycinamidine ribonucleotide (FGAM) and glutamate. This chain is Phosphoribosylformylglycinamidine synthase, found in Salmonella typhimurium (strain LT2 / SGSC1412 / ATCC 700720).